Reading from the N-terminus, the 126-residue chain is Tachykinin-3 (126 aa).

Positions 1 to 20 (MRSTLLFAVILALSSARSLG) are cleaved as a signal peptide. Residues 21 to 83 (AVCEESQEQV…VGPKESPLPQ (63 aa)) constitute a propeptide that is removed on maturation. A Methionine amide modification is found at Met95. The propeptide occupies 99 to 126 (NLQPDTPVDINQENIPSFGTFKYPPSVE). The interval 102-126 (PDTPVDINQENIPSFGTFKYPPSVE) is disordered.

Belongs to the tachykinin family.

It is found in the secreted. Tachykinins are active peptides which excite neurons, evoke behavioral responses, are potent vasodilators and secretagogues, and contract (directly or indirectly) many smooth muscles. Is a critical central regulator of gonadal function. This Bos taurus (Bovine) protein is Tachykinin-3 (TAC3).